Reading from the N-terminus, the 175-residue chain is Protein GrpE (175 aa).

This sequence belongs to the GrpE family. In terms of assembly, homodimer.

The protein localises to the cytoplasm. Functionally, participates actively in the response to hyperosmotic and heat shock by preventing the aggregation of stress-denatured proteins, in association with DnaK and GrpE. It is the nucleotide exchange factor for DnaK and may function as a thermosensor. Unfolded proteins bind initially to DnaJ; upon interaction with the DnaJ-bound protein, DnaK hydrolyzes its bound ATP, resulting in the formation of a stable complex. GrpE releases ADP from DnaK; ATP binding to DnaK triggers the release of the substrate protein, thus completing the reaction cycle. Several rounds of ATP-dependent interactions between DnaJ, DnaK and GrpE are required for fully efficient folding. This chain is Protein GrpE, found in Thermoplasma acidophilum (strain ATCC 25905 / DSM 1728 / JCM 9062 / NBRC 15155 / AMRC-C165).